A 267-amino-acid polypeptide reads, in one-letter code: Outer membrane protein assembly factor BamD (267 aa).

The first 16 residues, 1–16, serve as a signal peptide directing secretion; that stretch reads MKKILLTVSLGLALSA. The N-palmitoyl cysteine moiety is linked to residue C17. C17 is lipidated: S-diacylglycerol cysteine.

The protein belongs to the BamD family. As to quaternary structure, part of the Bam complex.

The protein localises to the cell outer membrane. Its function is as follows. Part of the outer membrane protein assembly complex, which is involved in assembly and insertion of beta-barrel proteins into the outer membrane. Required for efficient transformation of Neisseria meningitidis by species-related DNA. This chain is Outer membrane protein assembly factor BamD, found in Neisseria meningitidis serogroup A / serotype 4A (strain DSM 15465 / Z2491).